The following is a 169-amino-acid chain: Ubiquitin-conjugating enzyme E2 2 (169 aa).

The UBC core domain maps to 4-150; sequence AAKRRLIRDF…VKKTVELSWV (147 aa). The active-site Glycyl thioester intermediate is the C88.

Belongs to the ubiquitin-conjugating enzyme family.

The protein resides in the cytoplasm. The protein localises to the nucleus. The enzyme catalyses S-ubiquitinyl-[E1 ubiquitin-activating enzyme]-L-cysteine + [E2 ubiquitin-conjugating enzyme]-L-cysteine = [E1 ubiquitin-activating enzyme]-L-cysteine + S-ubiquitinyl-[E2 ubiquitin-conjugating enzyme]-L-cysteine.. Its pathway is protein modification; protein ubiquitination. Its function is as follows. Catalyzes the covalent attachment of ubiquitin to other proteins. Plays a role in transcription regulation by catalyzing the monoubiquitination of histone H2B to form H2BK123ub1. H2BK123ub1 gives a specific tag for epigenetic transcriptional activation and is also a prerequisite for H3K4me and H3K79me formation. Also involved in postreplication repair of UV-damaged DNA, in N-end rule-dependent protein degradation and in sporulation. The polypeptide is Ubiquitin-conjugating enzyme E2 2 (UBC2) (Cryptococcus neoformans var. neoformans serotype D (strain B-3501A) (Filobasidiella neoformans)).